Reading from the N-terminus, the 475-residue chain is MNTALAQQIANEGGVEAWMIAQQHKSLLRFLTCGSVDDGKSTLIGRLLHDTRQIYEDQLSSLHNDSKRHGTQGEKLDLALLVDGLQAEREQGITIDVAYRYFSTEKRKFIIADTPGHEQYTRNMATGASTCELAILLIDARKGVLDQTRRHSFISTLLGIKHLVVAINKMDLVDYSEETFTRIREDYLTFAGQLPGNLDIRFVPLSALEGDNVASQSESMPWYSGPTLLEVLETVEIQRVVDAQPMRFPVQYVNRPNLDFRGYAGTLASGRVEVGQRVKVLPSGVESNVARIVTFDGDREEAFAGEAITLVLTDEIDISRGDLLLAADEALPAVQSASVDVVWMAEQPLSPGQSYDIKIAGKKTRARVDGIRYQVDINNLTQREVENLPLNGIGLVDLTFDEPLVLDRYQQNPVTGGLIFIDRLSNVTVGAGMVHEPVSQATAAPSEFSAFELELNALVRRHFPHWGARDLLGDK.

One can recognise a tr-type G domain in the interval 25-239; it reads KSLLRFLTCG…EVLETVEIQR (215 aa). The interval 34–41 is G1; that stretch reads GSVDDGKS. 34-41 is a GTP binding site; the sequence is GSVDDGKS. The G2 stretch occupies residues 92-96; the sequence is GITID. A G3 region spans residues 113-116; the sequence is DTPG. GTP-binding positions include 113–117 and 168–171; these read DTPGH and NKMD. Residues 168 to 171 form a G4 region; sequence NKMD. Residues 206 to 208 form a G5 region; sequence SAL.

It belongs to the TRAFAC class translation factor GTPase superfamily. Classic translation factor GTPase family. CysN/NodQ subfamily. As to quaternary structure, heterodimer composed of CysD, the smaller subunit, and CysN.

It catalyses the reaction sulfate + ATP + H(+) = adenosine 5'-phosphosulfate + diphosphate. It participates in sulfur metabolism; hydrogen sulfide biosynthesis; sulfite from sulfate: step 1/3. In terms of biological role, with CysD forms the ATP sulfurylase (ATPS) that catalyzes the adenylation of sulfate producing adenosine 5'-phosphosulfate (APS) and diphosphate, the first enzymatic step in sulfur assimilation pathway. APS synthesis involves the formation of a high-energy phosphoric-sulfuric acid anhydride bond driven by GTP hydrolysis by CysN coupled to ATP hydrolysis by CysD. This is Sulfate adenylyltransferase subunit 1 from Shigella sonnei (strain Ss046).